The primary structure comprises 179 residues: Acireductone dioxygenase (179 aa).

Residues H99, H101, E105, and H143 each coordinate Fe(2+). The Ni(2+) site is built by H99, H101, E105, and H143.

The protein belongs to the acireductone dioxygenase (ARD) family. In terms of assembly, monomer. It depends on Fe(2+) as a cofactor. Ni(2+) is required as a cofactor.

It catalyses the reaction 1,2-dihydroxy-5-(methylsulfanyl)pent-1-en-3-one + O2 = 3-(methylsulfanyl)propanoate + CO + formate + 2 H(+). The catalysed reaction is 1,2-dihydroxy-5-(methylsulfanyl)pent-1-en-3-one + O2 = 4-methylsulfanyl-2-oxobutanoate + formate + 2 H(+). The protein operates within amino-acid biosynthesis; L-methionine biosynthesis via salvage pathway; L-methionine from S-methyl-5-thio-alpha-D-ribose 1-phosphate: step 5/6. Catalyzes 2 different reactions between oxygen and the acireductone 1,2-dihydroxy-3-keto-5-methylthiopentene (DHK-MTPene) depending upon the metal bound in the active site. Fe-containing acireductone dioxygenase (Fe-ARD) produces formate and 2-keto-4-methylthiobutyrate (KMTB), the alpha-ketoacid precursor of methionine in the methionine recycle pathway. Ni-containing acireductone dioxygenase (Ni-ARD) produces methylthiopropionate, carbon monoxide and formate, and does not lie on the methionine recycle pathway. This chain is Acireductone dioxygenase, found in Sulfurihydrogenibium sp. (strain YO3AOP1).